The chain runs to 1065 residues: Carbamoyl phosphate synthase large chain (1065 aa).

Positions 1-401 are carboxyphosphate synthetic domain; it reads MPLDKTIKKV…ALLKAVTSLE (401 aa). Arg-129, Arg-169, Gly-175, Gly-176, Gln-208, Val-210, Glu-215, Gly-241, Val-242, His-243, Gln-284, and Glu-298 together coordinate ATP. The ATP-grasp 1 domain occupies 133–327; the sequence is KNLMEEIDEP…IAKIAAKIAV (195 aa). Mg(2+) is bound by residues Gln-284, Glu-298, and Asn-300. Gln-284, Glu-298, and Asn-300 together coordinate Mn(2+). Residues 402–548 are oligomerization domain; that stretch reads GKISGLRLEK…YSSYENEDEN (147 aa). The carbamoyl phosphate synthetic domain stretch occupies residues 549–931; it reads EVTDDKKIVV…AIYKGFRAAG (383 aa). The ATP-grasp 2 domain maps to 673 to 863; it reads SELLKELNIP…MVKLAVEILT (191 aa). Residues Arg-709, Lys-748, Ile-750, Glu-754, Gly-779, Val-780, His-781, Ser-782, Gln-822, and Glu-834 each contribute to the ATP site. Mg(2+) is bound by residues Gln-822, Glu-834, and Asn-836. Residues Gln-822, Glu-834, and Asn-836 each contribute to the Mn(2+) site. The MGS-like domain occupies 932–1065; it reads IEVPKDGGNL…EYRAMKEYFK (134 aa). The allosteric domain stretch occupies residues 932-1065; it reads IEVPKDGGNL…EYRAMKEYFK (134 aa).

The protein belongs to the CarB family. In terms of assembly, composed of two chains; the small (or glutamine) chain promotes the hydrolysis of glutamine to ammonia, which is used by the large (or ammonia) chain to synthesize carbamoyl phosphate. Tetramer of heterodimers (alpha,beta)4. The cofactor is Mg(2+). Mn(2+) serves as cofactor.

The catalysed reaction is hydrogencarbonate + L-glutamine + 2 ATP + H2O = carbamoyl phosphate + L-glutamate + 2 ADP + phosphate + 2 H(+). It carries out the reaction hydrogencarbonate + NH4(+) + 2 ATP = carbamoyl phosphate + 2 ADP + phosphate + 2 H(+). It functions in the pathway amino-acid biosynthesis; L-arginine biosynthesis; carbamoyl phosphate from bicarbonate: step 1/1. It participates in pyrimidine metabolism; UMP biosynthesis via de novo pathway; (S)-dihydroorotate from bicarbonate: step 1/3. In terms of biological role, large subunit of the glutamine-dependent carbamoyl phosphate synthetase (CPSase). CPSase catalyzes the formation of carbamoyl phosphate from the ammonia moiety of glutamine, carbonate, and phosphate donated by ATP, constituting the first step of 2 biosynthetic pathways, one leading to arginine and/or urea and the other to pyrimidine nucleotides. The large subunit (synthetase) binds the substrates ammonia (free or transferred from glutamine from the small subunit), hydrogencarbonate and ATP and carries out an ATP-coupled ligase reaction, activating hydrogencarbonate by forming carboxy phosphate which reacts with ammonia to form carbamoyl phosphate. The chain is Carbamoyl phosphate synthase large chain from Clostridium acetobutylicum (strain ATCC 824 / DSM 792 / JCM 1419 / IAM 19013 / LMG 5710 / NBRC 13948 / NRRL B-527 / VKM B-1787 / 2291 / W).